The sequence spans 110 residues: Insulin (110 aa).

The N-terminal stretch at 1–24 (MALWMRLLPLLALLALWGPDPAAA) is a signal peptide. Intrachain disulfides connect Cys-31–Cys-96, Cys-43–Cys-109, and Cys-95–Cys-100. A propeptide spans 57 to 87 (EAEDLQVGQVELGGGPGAGSLQPLALEGSLQ) (c peptide).

It belongs to the insulin family. In terms of assembly, heterodimer of a B chain and an A chain linked by two disulfide bonds.

Its subcellular location is the secreted. In terms of biological role, insulin decreases blood glucose concentration. It increases cell permeability to monosaccharides, amino acids and fatty acids. It accelerates glycolysis, the pentose phosphate cycle, and glycogen synthesis in liver. The chain is Insulin (INS) from Gorilla gorilla gorilla (Western lowland gorilla).